A 192-amino-acid chain; its full sequence is Ciliary microtubule inner protein 3 (192 aa).

The segment at 24-108 (RAGAEGGPSL…SGQKVKAPHR (85 aa)) is disordered. Residues 55-64 (APRRPPRPRT) show a composition bias toward basic residues.

This sequence belongs to the CIMIP3-like family. Detected in the sperm flagellum (at protein level).

The protein localises to the cytoplasm. The protein resides in the cytoskeleton. It localises to the flagellum axoneme. The polypeptide is Ciliary microtubule inner protein 3 (Bos taurus (Bovine)).